We begin with the raw amino-acid sequence, 361 residues long: AP2/ERF and B3 domain-containing transcription repressor TEM1 (361 aa).

The disordered stretch occupies residues M1–K73. Residues S9–T27 are compositionally biased toward low complexity. The segment at residues K71–K126 is a DNA-binding region (AP2/ERF). A DNA-binding region (TF-B3) is located at residues F195 to S306.

Belongs to the AP2/ERF transcription factor family. RAV subfamily. As to quaternary structure, interacts with FT. Expressed in leaves.

The protein localises to the nucleus. Its function is as follows. Transcriptional repressor of flowering time on long day plants. Acts directly on FT expression by binding 5'-CAACA-3' and 5'-CACCTG-3 sequences. Functionally redundant with TEM2. This is AP2/ERF and B3 domain-containing transcription repressor TEM1 (TEM1) from Arabidopsis thaliana (Mouse-ear cress).